The following is a 352-amino-acid chain: Macrophage-capping protein (352 aa).

M1 carries the N-acetylmethionine modification. The Gelsolin-like 1 repeat unit spans residues 27 to 75 (EKLKPVPIARESHGIFFSGDSYLVLHNGPEEASHLHLWIGQQSSRDEQG). Positions 139–148 (RKLYQVKGKK) match the Nuclear localization signal motif. Gelsolin-like repeat units follow at residues 150 to 190 (IRAT…LERN) and 265 to 311 (MNLT…KERQ). S341 bears the Phosphoserine mark.

Belongs to the villin/gelsolin family. Interacts with NUP62. Interacts with NUTF2 and RAN; involved in CAPG nuclear import. In terms of processing, phosphorylated. Nuclear GCAP39 is more highly phosphorylated than cytoplasmic GCAP39. As to expression, present in a large variety of tissues and is particularly abundant in kidney and lung. Highly expressed in macrophages (at protein level).

The protein resides in the nucleus. It localises to the cytoplasm. It is found in the melanosome. Its subcellular location is the cell projection. The protein localises to the lamellipodium. The protein resides in the ruffle. In terms of biological role, calcium-sensitive protein which reversibly blocks the barbed ends of actin filaments but does not sever preformed actin filaments. May play an important role in macrophage function. May play a role in regulating cytoplasmic and/or nuclear structures through potential interactions with actin. May bind DNA. Uncapping occurs either when Ca(2+) falls or when the concentration of polyphosphoinositide rises, both at low and high Ca(2+). The sequence is that of Macrophage-capping protein (Capg) from Mus musculus (Mouse).